We begin with the raw amino-acid sequence, 86 residues long: Small ribosomal subunit protein bS16 (86 aa).

The protein belongs to the bacterial ribosomal protein bS16 family.

The protein is Small ribosomal subunit protein bS16 of Syntrophotalea carbinolica (strain DSM 2380 / NBRC 103641 / GraBd1) (Pelobacter carbinolicus).